We begin with the raw amino-acid sequence, 161 residues long: 3-isopropylmalate dehydratase small subunit (161 aa).

Belongs to the LeuD family. LeuD type 2 subfamily. Heterodimer of LeuC and LeuD.

The catalysed reaction is (2R,3S)-3-isopropylmalate = (2S)-2-isopropylmalate. Its pathway is amino-acid biosynthesis; L-leucine biosynthesis; L-leucine from 3-methyl-2-oxobutanoate: step 2/4. Its function is as follows. Catalyzes the isomerization between 2-isopropylmalate and 3-isopropylmalate, via the formation of 2-isopropylmaleate. The sequence is that of 3-isopropylmalate dehydratase small subunit from Sulfolobus acidocaldarius (strain ATCC 33909 / DSM 639 / JCM 8929 / NBRC 15157 / NCIMB 11770).